A 271-amino-acid chain; its full sequence is Bifunctional protein FolD (271 aa).

NADP(+)-binding positions include 154 to 156 (GRS), Ser181, and Ile222.

It belongs to the tetrahydrofolate dehydrogenase/cyclohydrolase family. In terms of assembly, homodimer.

It catalyses the reaction (6R)-5,10-methylene-5,6,7,8-tetrahydrofolate + NADP(+) = (6R)-5,10-methenyltetrahydrofolate + NADPH. It carries out the reaction (6R)-5,10-methenyltetrahydrofolate + H2O = (6R)-10-formyltetrahydrofolate + H(+). It functions in the pathway one-carbon metabolism; tetrahydrofolate interconversion. Its function is as follows. Catalyzes the oxidation of 5,10-methylenetetrahydrofolate to 5,10-methenyltetrahydrofolate and then the hydrolysis of 5,10-methenyltetrahydrofolate to 10-formyltetrahydrofolate. In Thermotoga maritima (strain ATCC 43589 / DSM 3109 / JCM 10099 / NBRC 100826 / MSB8), this protein is Bifunctional protein FolD.